Consider the following 330-residue polypeptide: Putative protein N-methyltransferase FAM86B2 (330 aa).

Position 1 is an N-acetylmethionine (M1). S-adenosyl-L-methionine is bound by residues W139, 165 to 167 (GSG), W228, and A247.

It belongs to the class I-like SAM-binding methyltransferase superfamily. EEF2KMT family. Interacts with EEF2KMT.

The chain is Putative protein N-methyltransferase FAM86B2 (FAM86B2) from Homo sapiens (Human).